Here is a 141-residue protein sequence, read N- to C-terminus: MLLHVIARGKIGRSPEAELVDRYARRISWGWKVTELPDRGGTVPPPSHTPSRTVAMDERGRQLTSSEFAAILGRWRDDGVRETRFLIGAADGHDEALRESADLLIAFGNATWPHMLARAMLAEQLWRATSILAGHPYHREG.

G88 provides a ligand contact to S-adenosyl-L-methionine.

It belongs to the RNA methyltransferase RlmH family. Homodimer.

It localises to the cytoplasm. It carries out the reaction pseudouridine(1915) in 23S rRNA + S-adenosyl-L-methionine = N(3)-methylpseudouridine(1915) in 23S rRNA + S-adenosyl-L-homocysteine + H(+). Specifically methylates the pseudouridine at position 1915 (m3Psi1915) in 23S rRNA. This is Ribosomal RNA large subunit methyltransferase H from Novosphingobium aromaticivorans (strain ATCC 700278 / DSM 12444 / CCUG 56034 / CIP 105152 / NBRC 16084 / F199).